The chain runs to 256 residues: Small ribosomal subunit protein uS2 (256 aa).

It belongs to the universal ribosomal protein uS2 family.

This is Small ribosomal subunit protein uS2 from Brucella anthropi (strain ATCC 49188 / DSM 6882 / CCUG 24695 / JCM 21032 / LMG 3331 / NBRC 15819 / NCTC 12168 / Alc 37) (Ochrobactrum anthropi).